Here is a 259-residue protein sequence, read N- to C-terminus: Glutamate racemase (259 aa).

Substrate contacts are provided by residues 7–8 and 39–40; these read DS and YG. Cys70 acts as the Proton donor/acceptor in catalysis. A substrate-binding site is contributed by 71–72; it reads NT. The active-site Proton donor/acceptor is the Cys180. 181–182 contributes to the substrate binding site; it reads TH.

It belongs to the aspartate/glutamate racemases family.

The catalysed reaction is L-glutamate = D-glutamate. It functions in the pathway cell wall biogenesis; peptidoglycan biosynthesis. In terms of biological role, provides the (R)-glutamate required for cell wall biosynthesis. This is Glutamate racemase from Persephonella marina (strain DSM 14350 / EX-H1).